The chain runs to 306 residues: MLNYFIKRLLGLIPTLLIVMVLVFLFVHLLPGDPARLAAGREADAAVIEMVRQDLGLDKPLPHQFWHFLTNILQGDLGTSMVSKRPVTQEIALRFMPTFWLTVCSMAWAVIFGMAIGIVSAVWRNGWPDRIGMTLAVSGLSFPAFALGMLLMQIFSVELGWLPTVGADTWLHYILPSLTLGAAVAAVMARFTRASFVDVLQEDYMRTARAKGVRESLVVLKHGLRNALIPVVTMMGLQFGFLLGGSIVVEKVFNWPGLGRLLVDSVEMRDYPVIQAEVLLFSLEFILINLLVDMLYAAINPAIRYK.

Residues 1 to 8 are Cytoplasmic-facing; that stretch reads MLNYFIKR. A helical membrane pass occupies residues 9–29; the sequence is LLGLIPTLLIVMVLVFLFVHL. The Periplasmic segment spans residues 30–98; that stretch reads LPGDPARLAA…QEIALRFMPT (69 aa). Positions 95 to 292 constitute an ABC transmembrane type-1 domain; that stretch reads FMPTFWLTVC…LEFILINLLV (198 aa). Residues 99-119 form a helical membrane-spanning segment; the sequence is FWLTVCSMAWAVIFGMAIGIV. Over 120–130 the chain is Cytoplasmic; sequence SAVWRNGWPDR. A helical transmembrane segment spans residues 131–151; it reads IGMTLAVSGLSFPAFALGMLL. At 152-168 the chain is on the periplasmic side; the sequence is MQIFSVELGWLPTVGAD. A helical membrane pass occupies residues 169 to 189; the sequence is TWLHYILPSLTLGAAVAAVMA. The Cytoplasmic portion of the chain corresponds to 190 to 228; it reads RFTRASFVDVLQEDYMRTARAKGVRESLVVLKHGLRNAL. The helical transmembrane segment at 229-249 threads the bilayer; it reads IPVVTMMGLQFGFLLGGSIVV. Over 250 to 278 the chain is Periplasmic; that stretch reads EKVFNWPGLGRLLVDSVEMRDYPVIQAEV. Residues 279 to 299 form a helical membrane-spanning segment; it reads LLFSLEFILINLLVDMLYAAI. The Cytoplasmic portion of the chain corresponds to 300-306; the sequence is NPAIRYK.

This sequence belongs to the binding-protein-dependent transport system permease family. The complex is composed of two ATP-binding proteins (GsiA), two transmembrane proteins (GsiC and GsiD) and a solute-binding protein (GsiB).

The protein resides in the cell inner membrane. In terms of biological role, part of the ABC transporter complex GsiABCD involved in glutathione import. Probably responsible for the translocation of the substrate across the membrane. The sequence is that of Glutathione transport system permease protein GsiC from Pectobacterium atrosepticum (strain SCRI 1043 / ATCC BAA-672) (Erwinia carotovora subsp. atroseptica).